The sequence spans 163 residues: Nucleotide-binding protein Asuc_2113 (163 aa).

Belongs to the YajQ family.

In terms of biological role, nucleotide-binding protein. This is Nucleotide-binding protein Asuc_2113 from Actinobacillus succinogenes (strain ATCC 55618 / DSM 22257 / CCUG 43843 / 130Z).